Consider the following 310-residue polypeptide: Olfactory receptor 2A12 (310 aa).

At 1–24 (MESNQTWITEVILLGFQVDPALEL) the chain is on the extracellular side. The N-linked (GlcNAc...) asparagine glycan is linked to Asn-4. The helical transmembrane segment at 25 to 48 (FLFGFFLLFYSLTLMGNGIILGLI) threads the bilayer. Residues 49-56 (YLDSRLHT) lie on the Cytoplasmic side of the membrane. The helical transmembrane segment at 57–78 (PMYVFLSHLAIVDMSYASSTVP) threads the bilayer. Residues 79–99 (KMLANLVMHKKVISFAPCILQ) lie on the Extracellular side of the membrane. Cys-96 and Cys-188 are oxidised to a cystine. Residues 100-119 (TFLYLAFAITECLILVMMCY) form a helical membrane-spanning segment. Over 120-138 (DRYVAICHPLQYTLIMNWR) the chain is Cytoplasmic. A helical transmembrane segment spans residues 139–157 (VCTVLASTCWIFSFLLALV). The Extracellular portion of the chain corresponds to 158-194 (HITLILRLPFCGPQKINHFFCQIMSVFKLACADTRLN). Residues 195–218 (QVVLFAGSAFILVGPLCLVLVSYL) traverse the membrane as a helical segment. Residues 219–235 (HILVAILRIQSGEGRRK) are Cytoplasmic-facing. The chain crosses the membrane as a helical span at residues 236–258 (AFSTCSSHLCVVGLFFGSAIVMY). The Extracellular portion of the chain corresponds to 259–271 (MAPKSSHSQERRK). A helical transmembrane segment spans residues 272-291 (ILSLFYSLFNPILNPLIYSL). Residues 292-310 (RNAEVKGALKRVLWKQRSM) lie on the Cytoplasmic side of the membrane.

It belongs to the G-protein coupled receptor 1 family.

The protein localises to the cell membrane. Functionally, odorant receptor. This chain is Olfactory receptor 2A12 (OR2A12), found in Homo sapiens (Human).